A 452-amino-acid chain; its full sequence is Imidazoleglycerol-phosphate dehydratase (452 aa).

The tract at residues 1-233 (MASPVQALLL…VGASVVLTPG (233 aa)) is unknown activity. The imidazoleglycerol-phosphate dehydratase stretch occupies residues 234 to 452 (LGELLDLVPA…GVPSTKGVLA (219 aa)).

Belongs to the imidazoleglycerol-phosphate dehydratase family.

The enzyme catalyses D-erythro-1-(imidazol-4-yl)glycerol 3-phosphate = 3-(imidazol-4-yl)-2-oxopropyl phosphate + H2O. It participates in amino-acid biosynthesis; L-histidine biosynthesis; L-histidine from 5-phospho-alpha-D-ribose 1-diphosphate: step 6/9. The chain is Imidazoleglycerol-phosphate dehydratase (HIS3) from Phytophthora nicotianae (Potato buckeye rot agent).